The following is a 318-amino-acid chain: L-lactate dehydrogenase (318 aa).

NAD(+)-binding residues include Val14, Asp35, Lys40, and Tyr66. Substrate is bound by residues Arg89 and 121–124; that span reads NPVD. Ser144 is a binding site for NAD(+). 149–152 is a binding site for substrate; the sequence is DTAR. His176 serves as the catalytic Proton acceptor. The residue at position 220 (Tyr220) is a Phosphotyrosine. Thr229 contacts substrate.

It belongs to the LDH/MDH superfamily. LDH family. As to quaternary structure, homotetramer.

It localises to the cytoplasm. The catalysed reaction is (S)-lactate + NAD(+) = pyruvate + NADH + H(+). It functions in the pathway fermentation; pyruvate fermentation to lactate; (S)-lactate from pyruvate: step 1/1. Functionally, catalyzes the conversion of lactate to pyruvate. The chain is L-lactate dehydrogenase from Staphylococcus haemolyticus (strain JCSC1435).